The following is a 485-amino-acid chain: NADH-quinone oxidoreductase subunit N (485 aa).

The next 14 membrane-spanning stretches (helical) occupy residues 8-28 (LIAL…MLSI), 35-55 (FLNA…LWFV), 75-95 (LYTG…YPWL), 105-125 (FYLL…ANHL), 127-147 (ALFL…GYAF), 159-179 (YTIL…LVYA), 203-223 (LLAG…LVPF), 235-255 (PAPV…GVVM), 271-291 (VVLG…ALSQ), 297-317 (LLGY…IALQ), 326-346 (VGVY…VVSL), 374-394 (AVMT…GFIG), 408-430 (WWLV…RVAV), and 455-475 (IVVL…QPLI).

This sequence belongs to the complex I subunit 2 family. In terms of assembly, NDH-1 is composed of 13 different subunits. Subunits NuoA, H, J, K, L, M, N constitute the membrane sector of the complex.

It localises to the cell inner membrane. It catalyses the reaction a quinone + NADH + 5 H(+)(in) = a quinol + NAD(+) + 4 H(+)(out). Functionally, NDH-1 shuttles electrons from NADH, via FMN and iron-sulfur (Fe-S) centers, to quinones in the respiratory chain. The immediate electron acceptor for the enzyme in this species is believed to be ubiquinone. Couples the redox reaction to proton translocation (for every two electrons transferred, four hydrogen ions are translocated across the cytoplasmic membrane), and thus conserves the redox energy in a proton gradient. The polypeptide is NADH-quinone oxidoreductase subunit N (Klebsiella pneumoniae (strain 342)).